Consider the following 321-residue polypeptide: Cytochrome c biogenesis protein CcsA (321 aa).

8 consecutive transmembrane segments (helical) span residues 17 to 37, 43 to 63, 71 to 91, 98 to 118, 143 to 163, 225 to 245, 258 to 275, and 286 to 306; these read IVSI…IVGL, KGMI…WIYS, LYES…VPKI, LSAI…SGLL, MVLS…LLVI, VISL…VWAN, ETWA…LHTR, and AIVA…VNLL.

It belongs to the CcmF/CycK/Ccl1/NrfE/CcsA family. In terms of assembly, may interact with Ccs1.

The protein resides in the plastid. It localises to the chloroplast thylakoid membrane. Functionally, required during biogenesis of c-type cytochromes (cytochrome c6 and cytochrome f) at the step of heme attachment. The polypeptide is Cytochrome c biogenesis protein CcsA (Platanus occidentalis (Sycamore)).